The primary structure comprises 208 residues: 2-dehydro-3-deoxy-phosphogluconate aldolase (208 aa).

The active-site Proton acceptor is Glu-41. Residues Arg-45, Thr-68, and Lys-128 each contribute to the pyruvate site. Lys-128 acts as the Schiff-base intermediate with substrate in catalysis.

Belongs to the KHG/KDPG aldolase family. Homotrimer.

The protein resides in the cytoplasm. It catalyses the reaction 2-dehydro-3-deoxy-6-phospho-D-gluconate = D-glyceraldehyde 3-phosphate + pyruvate. Its pathway is carbohydrate acid metabolism; 2-dehydro-3-deoxy-D-gluconate degradation; D-glyceraldehyde 3-phosphate and pyruvate from 2-dehydro-3-deoxy-D-gluconate: step 2/2. Its function is as follows. Involved in the degradation of glucose via the Entner-Doudoroff pathway. Catalyzes the reversible, stereospecific retro-aldol cleavage of 2-keto-3-deoxy-6-phosphogluconate (KDPG) to pyruvate and D-glyceraldehyde-3-phosphate. The polypeptide is 2-dehydro-3-deoxy-phosphogluconate aldolase (Zymomonas mobilis subsp. mobilis (strain ATCC 31821 / ZM4 / CP4)).